The sequence spans 60 residues: Serum basic protease inhibitor (60 aa).

A BPTI/Kunitz inhibitor domain is found at 7–57; sequence CLEPPYTGPCKAAMIRYFYNAKAGFCETFVYGGCRAKSNNFKSAEDCMRTC. 3 cysteine pairs are disulfide-bonded: C7/C57, C16/C40, and C32/C53.

Its subcellular location is the secreted. Functionally, this inhibitor has activity very similar to that of the basic protease inhibitor from bovine tissues. This chain is Serum basic protease inhibitor, found in Bos taurus (Bovine).